The chain runs to 275 residues: Formamidopyrimidine-DNA glycosylase (275 aa).

P2 (schiff-base intermediate with DNA) is an active-site residue. Catalysis depends on E3, which acts as the Proton donor. K58 functions as the Proton donor; for beta-elimination activity in the catalytic mechanism. Positions 93, 111, and 156 each coordinate DNA. The FPG-type zinc finger occupies 241 to 275; that stretch reads FVYDRAGQPCRVCGTPIRQIVQGQRSTYYCPTCQR. The active-site Proton donor; for delta-elimination activity is the R265.

Belongs to the FPG family. In terms of assembly, monomer. Zn(2+) is required as a cofactor.

The enzyme catalyses Hydrolysis of DNA containing ring-opened 7-methylguanine residues, releasing 2,6-diamino-4-hydroxy-5-(N-methyl)formamidopyrimidine.. The catalysed reaction is 2'-deoxyribonucleotide-(2'-deoxyribose 5'-phosphate)-2'-deoxyribonucleotide-DNA = a 3'-end 2'-deoxyribonucleotide-(2,3-dehydro-2,3-deoxyribose 5'-phosphate)-DNA + a 5'-end 5'-phospho-2'-deoxyribonucleoside-DNA + H(+). Its function is as follows. Involved in base excision repair of DNA damaged by oxidation or by mutagenic agents. Acts as a DNA glycosylase that recognizes and removes damaged bases. Has a preference for oxidized purines, such as 7,8-dihydro-8-oxoguanine (8-oxoG). Has AP (apurinic/apyrimidinic) lyase activity and introduces nicks in the DNA strand. Cleaves the DNA backbone by beta-delta elimination to generate a single-strand break at the site of the removed base with both 3'- and 5'-phosphates. In Burkholderia cenocepacia (strain ATCC BAA-245 / DSM 16553 / LMG 16656 / NCTC 13227 / J2315 / CF5610) (Burkholderia cepacia (strain J2315)), this protein is Formamidopyrimidine-DNA glycosylase.